Consider the following 157-residue polypeptide: Small ribosomal subunit protein uS7cz/uS7cy (157 aa).

This sequence belongs to the universal ribosomal protein uS7 family. Part of the 30S ribosomal subunit.

It localises to the plastid. The protein resides in the chloroplast. In terms of biological role, one of the primary rRNA binding proteins, it binds directly to 16S rRNA where it nucleates assembly of the head domain of the 30S subunit. The sequence is that of Small ribosomal subunit protein uS7cz/uS7cy (rps7-A) from Gnetum parvifolium (Small-leaved jointfir).